Consider the following 442-residue polypeptide: Transforming growth factor beta-2 proprotein (442 aa).

The first 20 residues, 1 to 20, serve as a signal peptide directing secretion; the sequence is MHYCVLRTFLLLHLVPVALS. Asparagine 72, asparagine 168, and asparagine 269 each carry an N-linked (GlcNAc...) asparagine glycan. Cystine bridges form between cysteine 337/cysteine 346, cysteine 345/cysteine 408, cysteine 374/cysteine 439, and cysteine 378/cysteine 441.

It belongs to the TGF-beta family. Interacts with the serine proteases, HTRA1 and HTRA3. Interacts with ASPN. Interacts with MFAP5. As to quaternary structure, interacts with Transforming growth factor beta-2 (TGF-beta-2) chain; interaction is non-covalent and maintains (TGF-beta-2) in a latent state. Interacts with LRRC32/GARP; leading to regulate activation of TGF-beta-2. Interacts with NREP; the interaction results in a decrease in TGFB2 autoinduction. In terms of assembly, transforming growth factor beta-2: Homodimer; disulfide-linked. Transforming growth factor beta-2: Interacts with TGF-beta receptors (TGFBR1 and TGFBR2), leading to signal transduction. The precursor proprotein is cleaved in the Golgi apparatus to form Transforming growth factor beta-2 (TGF-beta-2) and Latency-associated peptide (LAP) chains, which remain non-covalently linked, rendering TGF-beta-2 inactive. As to expression, expressed in cardiomyocytes. In terms of tissue distribution, expressed in the aorta, primary bronchus, uterus, heart, skeletal muscle, sciatic nerve and spinal cord but not in the intestine.

It is found in the secreted. The protein localises to the extracellular space. Its subcellular location is the extracellular matrix. Precursor of the Latency-associated peptide (LAP) and Transforming growth factor beta-2 (TGF-beta-2) chains, which constitute the regulatory and active subunit of TGF-beta-2, respectively. In terms of biological role, required to maintain the Transforming growth factor beta-2 (TGF-beta-2) chain in a latent state during storage in extracellular matrix. Associates non-covalently with TGF-beta-2 and regulates its activation via interaction with 'milieu molecules', such as LTBP1 and LRRC32/GARP, that control activation of TGF-beta-2. Functionally, multifunctional protein that regulates various processes such as angiogenesis and heart development. Activation into mature form follows different steps: following cleavage of the proprotein in the Golgi apparatus, Latency-associated peptide (LAP) and Transforming growth factor beta-2 (TGF-beta-2) chains remain non-covalently linked rendering TGF-beta-2 inactive during storage in extracellular matrix. At the same time, LAP chain interacts with 'milieu molecules', such as LTBP1 and LRRC32/GARP, that control activation of TGF-beta-2 and maintain it in a latent state during storage in extracellular milieus. Once activated following release of LAP, TGF-beta-2 acts by binding to TGF-beta receptors (TGFBR1 and TGFBR2), which transduce signal. This Rattus norvegicus (Rat) protein is Transforming growth factor beta-2 proprotein (Tgfb2).